Here is a 153-residue protein sequence, read N- to C-terminus: Transcription antitermination protein NusB (153 aa).

Belongs to the NusB family.

Its function is as follows. Involved in transcription antitermination. Required for transcription of ribosomal RNA (rRNA) genes. Binds specifically to the boxA antiterminator sequence of the ribosomal RNA (rrn) operons. In Beutenbergia cavernae (strain ATCC BAA-8 / DSM 12333 / CCUG 43141 / JCM 11478 / NBRC 16432 / NCIMB 13614 / HKI 0122), this protein is Transcription antitermination protein NusB.